We begin with the raw amino-acid sequence, 553 residues long: 5'-nucleotidase (553 aa).

Positions 1–21 (MKQGLILKSVLSAAIIASLAG) are cleaved as a signal peptide. C22 carries the N-palmitoyl cysteine lipid modification. C22 is lipidated: S-diacylglycerol cysteine. A divalent metal cation is bound by residues D45, H47, D88, N120, H221, H256, and Q258. Residues F432 and 501-507 (FNAAGGD) each bind substrate.

The protein belongs to the 5'-nucleotidase family. Chloride serves as cofactor. Mg(2+) is required as a cofactor.

It localises to the cell outer membrane. It carries out the reaction a ribonucleoside 5'-phosphate + H2O = a ribonucleoside + phosphate. In terms of biological role, degradation of extracellular 5'-nucleotides for nutritional needs. The polypeptide is 5'-nucleotidase (nutA) (Vibrio cholerae serotype O1 (strain ATCC 39315 / El Tor Inaba N16961)).